The sequence spans 321 residues: Acetyl-coenzyme A carboxylase carboxyl transferase subunit alpha (321 aa).

The CoA carboxyltransferase C-terminal domain occupies 39-293; it reads RLQQKSQNLA…RRALGDALRQ (255 aa).

The protein belongs to the AccA family. In terms of assembly, acetyl-CoA carboxylase is a heterohexamer composed of biotin carboxyl carrier protein (AccB), biotin carboxylase (AccC) and two subunits each of ACCase subunit alpha (AccA) and ACCase subunit beta (AccD).

The protein resides in the cytoplasm. The enzyme catalyses N(6)-carboxybiotinyl-L-lysyl-[protein] + acetyl-CoA = N(6)-biotinyl-L-lysyl-[protein] + malonyl-CoA. The protein operates within lipid metabolism; malonyl-CoA biosynthesis; malonyl-CoA from acetyl-CoA: step 1/1. Its function is as follows. Component of the acetyl coenzyme A carboxylase (ACC) complex. First, biotin carboxylase catalyzes the carboxylation of biotin on its carrier protein (BCCP) and then the CO(2) group is transferred by the carboxyltransferase to acetyl-CoA to form malonyl-CoA. This chain is Acetyl-coenzyme A carboxylase carboxyl transferase subunit alpha, found in Bordetella bronchiseptica (strain ATCC BAA-588 / NCTC 13252 / RB50) (Alcaligenes bronchisepticus).